Consider the following 309-residue polypeptide: Homoserine O-succinyltransferase (309 aa).

The active-site Acyl-thioester intermediate is the Cys142. The substrate site is built by Lys163 and Ser192. His235 acts as the Proton acceptor in catalysis. The active site involves Glu237. Residue Arg249 coordinates substrate.

This sequence belongs to the MetA family. As to quaternary structure, homodimer.

The protein localises to the cytoplasm. The enzyme catalyses L-homoserine + succinyl-CoA = O-succinyl-L-homoserine + CoA. Its pathway is amino-acid biosynthesis; L-methionine biosynthesis via de novo pathway; O-succinyl-L-homoserine from L-homoserine: step 1/1. Functionally, transfers a succinyl group from succinyl-CoA to L-homoserine, forming succinyl-L-homoserine. This is Homoserine O-succinyltransferase from Escherichia coli O157:H7.